A 130-amino-acid chain; its full sequence is Protein ApaG (130 aa).

One can recognise an ApaG domain in the interval 3 to 127 (KAETRGISVT…FSLDSPHVRR (125 aa)).

The protein is Protein ApaG of Methylobacterium radiotolerans (strain ATCC 27329 / DSM 1819 / JCM 2831 / NBRC 15690 / NCIMB 10815 / 0-1).